Here is a 31-residue protein sequence, read N- to C-terminus: Cytochrome b6-f complex subunit 6 (31 aa).

A helical membrane pass occupies residues 3–23 (IITSYFGFLLTALTIASALFI).

Belongs to the PetL family. The 4 large subunits of the cytochrome b6-f complex are cytochrome b6, subunit IV (17 kDa polypeptide, PetD), cytochrome f and the Rieske protein, while the 4 small subunits are PetG, PetL, PetM and PetN. The complex functions as a dimer.

It is found in the plastid. The protein resides in the chloroplast thylakoid membrane. Its function is as follows. Component of the cytochrome b6-f complex, which mediates electron transfer between photosystem II (PSII) and photosystem I (PSI), cyclic electron flow around PSI, and state transitions. PetL is important for photoautotrophic growth as well as for electron transfer efficiency and stability of the cytochrome b6-f complex. In Helianthus annuus (Common sunflower), this protein is Cytochrome b6-f complex subunit 6.